A 208-amino-acid polypeptide reads, in one-letter code: Uracil phosphoribosyltransferase (208 aa).

5-phospho-alpha-D-ribose 1-diphosphate contacts are provided by residues arginine 78, arginine 103, and 130-138 (DPMLATGGT). Residues isoleucine 193 and 198-200 (GDA) contribute to the uracil site. Residue aspartate 199 coordinates 5-phospho-alpha-D-ribose 1-diphosphate.

This sequence belongs to the UPRTase family. Requires Mg(2+) as cofactor.

It carries out the reaction UMP + diphosphate = 5-phospho-alpha-D-ribose 1-diphosphate + uracil. The protein operates within pyrimidine metabolism; UMP biosynthesis via salvage pathway; UMP from uracil: step 1/1. With respect to regulation, allosterically activated by GTP. Catalyzes the conversion of uracil and 5-phospho-alpha-D-ribose 1-diphosphate (PRPP) to UMP and diphosphate. The polypeptide is Uracil phosphoribosyltransferase (Solidesulfovibrio magneticus (strain ATCC 700980 / DSM 13731 / RS-1) (Desulfovibrio magneticus)).